A 273-amino-acid chain; its full sequence is Dermonecrotic toxin LruSicTox-alphaIC1c (273 aa).

His5 is a catalytic residue. Residues Glu25 and Asp27 each coordinate Mg(2+). Catalysis depends on His41, which acts as the Nucleophile. 2 cysteine pairs are disulfide-bonded: Cys45/Cys51 and Cys47/Cys190. Residue Asp85 participates in Mg(2+) binding.

Belongs to the arthropod phospholipase D family. Class II subfamily. Mg(2+) is required as a cofactor. In terms of tissue distribution, expressed by the venom gland.

Its subcellular location is the secreted. The catalysed reaction is an N-(acyl)-sphingosylphosphocholine = an N-(acyl)-sphingosyl-1,3-cyclic phosphate + choline. It catalyses the reaction an N-(acyl)-sphingosylphosphoethanolamine = an N-(acyl)-sphingosyl-1,3-cyclic phosphate + ethanolamine. The enzyme catalyses a 1-acyl-sn-glycero-3-phosphocholine = a 1-acyl-sn-glycero-2,3-cyclic phosphate + choline. It carries out the reaction a 1-acyl-sn-glycero-3-phosphoethanolamine = a 1-acyl-sn-glycero-2,3-cyclic phosphate + ethanolamine. Dermonecrotic toxins cleave the phosphodiester linkage between the phosphate and headgroup of certain phospholipids (sphingolipid and lysolipid substrates), forming an alcohol (often choline) and a cyclic phosphate. This toxin acts on sphingomyelin (SM). It may also act on ceramide phosphoethanolamine (CPE), lysophosphatidylcholine (LPC) and lysophosphatidylethanolamine (LPE), but not on lysophosphatidylserine (LPS), and lysophosphatidylglycerol (LPG). It acts by transphosphatidylation, releasing exclusively cyclic phosphate products as second products. Induces dermonecrosis, hemolysis, increased vascular permeability, edema, inflammatory response, and platelet aggregation. The polypeptide is Dermonecrotic toxin LruSicTox-alphaIC1c (Loxosceles rufescens (Mediterranean recluse spider)).